The sequence spans 465 residues: L-seryl-tRNA(Sec) selenium transferase (465 aa).

Residue lysine 294 is modified to N6-(pyridoxal phosphate)lysine.

It belongs to the SelA family. Pyridoxal 5'-phosphate is required as a cofactor.

It is found in the cytoplasm. The catalysed reaction is L-seryl-tRNA(Sec) + selenophosphate + H(+) = L-selenocysteinyl-tRNA(Sec) + phosphate. It functions in the pathway aminoacyl-tRNA biosynthesis; selenocysteinyl-tRNA(Sec) biosynthesis; selenocysteinyl-tRNA(Sec) from L-seryl-tRNA(Sec) (bacterial route): step 1/1. Converts seryl-tRNA(Sec) to selenocysteinyl-tRNA(Sec) required for selenoprotein biosynthesis. The sequence is that of L-seryl-tRNA(Sec) selenium transferase from Maridesulfovibrio salexigens (strain ATCC 14822 / DSM 2638 / NCIMB 8403 / VKM B-1763) (Desulfovibrio salexigens).